Here is a 401-residue protein sequence, read N- to C-terminus: Thermophilic serine proteinase (401 aa).

Residues 1-24 (MKFKAIVSLSLAVSMSLFPFLVEA) form the signal peptide. A propeptide spanning residues 25–121 (ASNDGVESPK…AEPNYLFNAA (97 aa)) is cleaved from the precursor. A Ca(2+)-binding site is contributed by Asp126. The Peptidase S8 domain maps to 133–399 (QYGPQNTYTD…YGRINSYNAV (267 aa)). Asp160 acts as the Charge relay system in catalysis. Ca(2+)-binding residues include Pro168, Asp169, Asp171, Asp179, Asp184, and Asp186. The Charge relay system role is filled by His193. Ca(2+) contacts are provided by Glu204, Asn207, Thr209, and Ile211. Cys258 and Cys260 are joined by a disulfide. 3 residues coordinate Na(+): Tyr297, Val300, and Asp323. Ser347 acts as the Charge relay system in catalysis.

It belongs to the peptidase S8 family. The cofactor is Ca(2+). Requires Na(+) as cofactor.

The protein resides in the secreted. The polypeptide is Thermophilic serine proteinase (Bacillus sp. (strain AK1)).